A 195-amino-acid chain; its full sequence is dITP/XTP pyrophosphatase (195 aa).

Residue Ser-7 to Lys-12 coordinates substrate. Mg(2+) is bound by residues Glu-38 and Asp-68. Asp-68 (proton acceptor) is an active-site residue. Substrate-binding positions include Ser-69, Phe-150–Asp-153, Lys-173, and His-178–Arg-179.

The protein belongs to the HAM1 NTPase family. In terms of assembly, homodimer. Mg(2+) serves as cofactor.

It catalyses the reaction XTP + H2O = XMP + diphosphate + H(+). The enzyme catalyses dITP + H2O = dIMP + diphosphate + H(+). It carries out the reaction ITP + H2O = IMP + diphosphate + H(+). Its function is as follows. Pyrophosphatase that catalyzes the hydrolysis of nucleoside triphosphates to their monophosphate derivatives, with a high preference for the non-canonical purine nucleotides XTP (xanthosine triphosphate), dITP (deoxyinosine triphosphate) and ITP. Seems to function as a house-cleaning enzyme that removes non-canonical purine nucleotides from the nucleotide pool, thus preventing their incorporation into DNA/RNA and avoiding chromosomal lesions. This is dITP/XTP pyrophosphatase from Nautilia profundicola (strain ATCC BAA-1463 / DSM 18972 / AmH).